The sequence spans 144 residues: Large ribosomal subunit protein uL15 (144 aa).

A disordered region spans residues 1 to 52; it reads MRLNTLSPAEGAKHSAKRLGRGIGSGLGKTGGRGHKGQKSRTGSGVRRGFEG. The span at 21–31 shows a compositional bias: gly residues; it reads RGIGSGLGKTG.

This sequence belongs to the universal ribosomal protein uL15 family. Part of the 50S ribosomal subunit.

Functionally, binds to the 23S rRNA. This Haemophilus influenzae (strain 86-028NP) protein is Large ribosomal subunit protein uL15.